The primary structure comprises 231 residues: Ribosomal RNA small subunit methyltransferase G (231 aa).

S-adenosyl-L-methionine-binding positions include Gly-92, Leu-97, 143-144 (VE), and Arg-162.

Belongs to the methyltransferase superfamily. RNA methyltransferase RsmG family.

It localises to the cytoplasm. It catalyses the reaction guanosine(527) in 16S rRNA + S-adenosyl-L-methionine = N(7)-methylguanosine(527) in 16S rRNA + S-adenosyl-L-homocysteine. Specifically methylates the N7 position of guanine in position 527 of 16S rRNA. The chain is Ribosomal RNA small subunit methyltransferase G from Burkholderia thailandensis (strain ATCC 700388 / DSM 13276 / CCUG 48851 / CIP 106301 / E264).